Reading from the N-terminus, the 192-residue chain is Pyridoxal 5'-phosphate synthase subunit PdxT (192 aa).

An L-glutamine-binding site is contributed by 53–55; that stretch reads GES. Catalysis depends on C85, which acts as the Nucleophile. Residues R112 and 140–141 contribute to the L-glutamine site; that span reads IR. Residues H176 and E178 each act as charge relay system in the active site.

Belongs to the glutaminase PdxT/SNO family. As to quaternary structure, in the presence of PdxS, forms a dodecamer of heterodimers. Only shows activity in the heterodimer.

The catalysed reaction is aldehydo-D-ribose 5-phosphate + D-glyceraldehyde 3-phosphate + L-glutamine = pyridoxal 5'-phosphate + L-glutamate + phosphate + 3 H2O + H(+). It carries out the reaction L-glutamine + H2O = L-glutamate + NH4(+). Its pathway is cofactor biosynthesis; pyridoxal 5'-phosphate biosynthesis. Functionally, catalyzes the hydrolysis of glutamine to glutamate and ammonia as part of the biosynthesis of pyridoxal 5'-phosphate. The resulting ammonia molecule is channeled to the active site of PdxS. This Natronomonas pharaonis (strain ATCC 35678 / DSM 2160 / CIP 103997 / JCM 8858 / NBRC 14720 / NCIMB 2260 / Gabara) (Halobacterium pharaonis) protein is Pyridoxal 5'-phosphate synthase subunit PdxT.